Consider the following 216-residue polypeptide: GTP cyclohydrolase-2 (216 aa).

Residue 50–54 (RIHSE) participates in GTP binding. Residues Cys55, Cys66, and Cys68 each contribute to the Zn(2+) site. Residues Gln71, 93 to 95 (EGR), and Thr115 each bind GTP. Asp127 (proton acceptor) is an active-site residue. Arg129 functions as the Nucleophile in the catalytic mechanism. Thr150 and Lys155 together coordinate GTP.

Belongs to the GTP cyclohydrolase II family. Zn(2+) is required as a cofactor.

The enzyme catalyses GTP + 4 H2O = 2,5-diamino-6-hydroxy-4-(5-phosphoribosylamino)-pyrimidine + formate + 2 phosphate + 3 H(+). The protein operates within cofactor biosynthesis; riboflavin biosynthesis; 5-amino-6-(D-ribitylamino)uracil from GTP: step 1/4. In terms of biological role, catalyzes the conversion of GTP to 2,5-diamino-6-ribosylamino-4(3H)-pyrimidinone 5'-phosphate (DARP), formate and pyrophosphate. This Histophilus somni (strain 129Pt) (Haemophilus somnus) protein is GTP cyclohydrolase-2.